A 542-amino-acid chain; its full sequence is Chaperonin GroEL (542 aa).

ATP is bound by residues 29–32 (TLGP), Lys50, 86–90 (DGTTT), Gly415, and Asp495.

The protein belongs to the chaperonin (HSP60) family. Forms a cylinder of 14 subunits composed of two heptameric rings stacked back-to-back. Interacts with the co-chaperonin GroES.

It is found in the cytoplasm. It catalyses the reaction ATP + H2O + a folded polypeptide = ADP + phosphate + an unfolded polypeptide.. Its function is as follows. Together with its co-chaperonin GroES, plays an essential role in assisting protein folding. The GroEL-GroES system forms a nano-cage that allows encapsulation of the non-native substrate proteins and provides a physical environment optimized to promote and accelerate protein folding. This chain is Chaperonin GroEL, found in Azobacteroides pseudotrichonymphae genomovar. CFP2.